Consider the following 131-residue polypeptide: Binder of sperm protein homolog 2 (131 aa).

An N-terminal signal peptide occupies residues 1 to 22 (MEVMSHLVHWVFLAVYMYELNA). Fibronectin type-II domains are found at residues 35 to 79 (ISTD…YCTA) and 80 to 128 (QDPP…QCSP). Intrachain disulfides connect Cys-40–Cys-64, Cys-54–Cys-77, Cys-85–Cys-111, and Cys-99–Cys-126.

Belongs to the seminal plasma protein family. As to expression, epididymis.

Its subcellular location is the secreted. Functionally, binds sperm in vitro but has no effect on sperm capacitation. Also binds gelatin and heparin, but not chondroitin sulfate B or phospholipid liposomes. The chain is Binder of sperm protein homolog 2 from Mus musculus (Mouse).